We begin with the raw amino-acid sequence, 155 residues long: E3 ubiquitin-protein ligase RHA2A (155 aa).

An RING-type; atypical zinc finger spans residues 86 to 128 (CVVCLSKLKEGEEVRKLECRHVFHKKCLEGWLHQFNFTCPLCR).

In terms of assembly, interacts with NAC019 and NAC055. In terms of tissue distribution, expressed in stems, flowers, cauline leaves, rosettes, siliques, seeds and roots.

The protein resides in the cytoplasm. It localises to the nucleus. It catalyses the reaction S-ubiquitinyl-[E2 ubiquitin-conjugating enzyme]-L-cysteine + [acceptor protein]-L-lysine = [E2 ubiquitin-conjugating enzyme]-L-cysteine + N(6)-ubiquitinyl-[acceptor protein]-L-lysine.. It functions in the pathway protein modification; protein ubiquitination. In terms of biological role, E3 ubiquitin-protein ligase involved in the positive regulation of abscisic acid (ABA) signaling and responses to salt and osmotic stresses during seed germination and early seedling development. Acts additively with RHA2B in regulating ABA signaling and drought response. Possesses E3 ubiquitin ligase activity in vitro. The chain is E3 ubiquitin-protein ligase RHA2A from Arabidopsis thaliana (Mouse-ear cress).